The chain runs to 288 residues: Threonine-rich protein (288 aa).

The signal sequence occupies residues 1-20 (MKAFLLSLATLLACIVLTES). Residues 141 to 150 (TTVTPQTTDG) are compositionally biased toward polar residues. A disordered region spans residues 141–260 (TTVTPQTTDG…PAPTTTPAPT (120 aa)). A compositionally biased stretch (low complexity) spans 151–253 (NTTTEAPTST…TAAPTTTPAP (103 aa)).

As to expression, component of the acid-insoluble and acid-soluble organic matrix of the aragonitic skeleton (at protein level).

The protein resides in the secreted. The protein is Threonine-rich protein of Acropora millepora (Staghorn coral).